The following is an 872-amino-acid chain: Telomerase component p95 (872 aa).

2 disordered regions span residues 55 to 75 and 471 to 492; these read NQDQ…NSNK and KNNK…ESTS. Residues 474 to 486 show a composition bias toward basic and acidic residues; the sequence is KNQEETPETKDET.

In terms of assembly, telomerase consist of two subunit, p80 and p95 that form a 1:1:1 complex with the 159 nt telomerase RNA.

The protein resides in the nucleus. Its subcellular location is the chromosome. The protein localises to the telomere. It catalyses the reaction DNA(n) + a 2'-deoxyribonucleoside 5'-triphosphate = DNA(n+1) + diphosphate. Functionally, ribonucleoprotein DNA polymerase that catalyzes the de novo synthesis of telomeric simple sequence repeats. Subunit p95 contains some or all of the template-independent primer DNA-binding site termed the anchor site. The protein is Telomerase component p95 of Tetrahymena thermophila.